Consider the following 252-residue polypeptide: Type III pantothenate kinase (252 aa).

Residue 6 to 13 (DVGNTHTT) participates in ATP binding. Residue 104–107 (GADR) participates in substrate binding. The Proton acceptor role is filled by aspartate 106. Aspartate 126 contributes to the K(+) binding site. ATP is bound at residue threonine 129. Threonine 180 is a substrate binding site.

Belongs to the type III pantothenate kinase family. Homodimer. Requires NH4(+) as cofactor. K(+) is required as a cofactor.

It localises to the cytoplasm. It catalyses the reaction (R)-pantothenate + ATP = (R)-4'-phosphopantothenate + ADP + H(+). It participates in cofactor biosynthesis; coenzyme A biosynthesis; CoA from (R)-pantothenate: step 1/5. Its function is as follows. Catalyzes the phosphorylation of pantothenate (Pan), the first step in CoA biosynthesis. The protein is Type III pantothenate kinase of Fervidobacterium nodosum (strain ATCC 35602 / DSM 5306 / Rt17-B1).